A 102-amino-acid polypeptide reads, in one-letter code: Small ribosomal subunit protein uS10 (102 aa).

The protein belongs to the universal ribosomal protein uS10 family. In terms of assembly, part of the 30S ribosomal subunit.

Involved in the binding of tRNA to the ribosomes. This is Small ribosomal subunit protein uS10 from Paramagnetospirillum magneticum (strain ATCC 700264 / AMB-1) (Magnetospirillum magneticum).